A 205-amino-acid chain; its full sequence is Mediator of RNA polymerase II transcription subunit 29 (205 aa).

Residues 1–27 (MNPNMNMMQMSGPPMMQVSPMMQSSPQ) show a composition bias toward low complexity. The segment at 1–65 (MNPNMNMMQM…QQQQQQAEKL (65 aa)) is disordered. Over residues 28-38 (PMMPTGPPGPV) the composition is skewed to pro residues. Residues 39 to 61 (PMQQQHQQQQQQQQQQQQQQQQQ) are compositionally biased toward low complexity.

This sequence belongs to the Mediator complex subunit 29 family. Component of the Mediator complex.

It localises to the nucleus. In terms of biological role, component of the Mediator complex, a coactivator involved in the regulated transcription of nearly all RNA polymerase II-dependent genes. Mediator functions as a bridge to convey information from gene-specific regulatory proteins to the basal RNA polymerase II transcription machinery. Mediator is recruited to promoters by direct interactions with regulatory proteins and serves as a scaffold for the assembly of a functional preinitiation complex with RNA polymerase II and the general transcription factors. In Drosophila virilis (Fruit fly), this protein is Mediator of RNA polymerase II transcription subunit 29 (ix).